We begin with the raw amino-acid sequence, 293 residues long: tRNA (guanine(9)-N1)-methyltransferase (293 aa).

The disordered stretch occupies residues 1–31 (MSNDEINQNEEKVKRTPPLPPVPEGMSKKQW). Phosphothreonine is present on Thr16. A coiled-coil region spans residues 32–61 (KKMCKRQRWEENKAKYNAERRVKKKRLRHE). The SAM-dependent MTase TRM10-type domain occupies 83 to 279 (EPRINVNQTD…SVLPPRKLDA (197 aa)). S-adenosyl-L-methionine contacts are provided by residues 186 to 187 (LT), Gly206, 210 to 214 (DKNRY), Cys218, Leu232, and 244 to 246 (RVL). The active-site Proton acceptor is Asp210. Position 283 is a phosphoserine (Ser283).

The protein belongs to the class IV-like SAM-binding methyltransferase superfamily. TRM10 family. As to quaternary structure, monomer.

Its subcellular location is the cytoplasm. It localises to the nucleus. It catalyses the reaction guanosine(9) in tRNA + S-adenosyl-L-methionine = N(1)-methylguanosine(9) in tRNA + S-adenosyl-L-homocysteine + H(+). S-adenosyl-L-methionine-dependent guanine N(1)-methyltransferase that catalyzes the formation of N(1)-methylguanine at position 9 (m1G9) in cytoplasmic tRNAs. In Saccharomyces cerevisiae (strain ATCC 204508 / S288c) (Baker's yeast), this protein is tRNA (guanine(9)-N1)-methyltransferase.